Reading from the N-terminus, the 59-residue chain is UPF0434 protein Rsph17025_2896 (59 aa).

It belongs to the UPF0434 family.

This Cereibacter sphaeroides (strain ATCC 17025 / ATH 2.4.3) (Rhodobacter sphaeroides) protein is UPF0434 protein Rsph17025_2896.